The chain runs to 209 residues: Translation initiation factor IF-3 (209 aa).

This sequence belongs to the IF-3 family. Monomer.

It localises to the cytoplasm. In terms of biological role, IF-3 binds to the 30S ribosomal subunit and shifts the equilibrium between 70S ribosomes and their 50S and 30S subunits in favor of the free subunits, thus enhancing the availability of 30S subunits on which protein synthesis initiation begins. This Chlorobium phaeobacteroides (strain DSM 266 / SMG 266 / 2430) protein is Translation initiation factor IF-3.